Reading from the N-terminus, the 199-residue chain is Recombination protein RecR (199 aa).

The C4-type zinc finger occupies 58 to 73 (CSTCNNLTDKDPCTIC). The Toprim domain occupies 81-176 (NLICVVQDAR…RVTRLAYGLP (96 aa)).

This sequence belongs to the RecR family.

May play a role in DNA repair. It seems to be involved in an RecBC-independent recombinational process of DNA repair. It may act with RecF and RecO. The sequence is that of Recombination protein RecR from Natranaerobius thermophilus (strain ATCC BAA-1301 / DSM 18059 / JW/NM-WN-LF).